A 226-amino-acid chain; its full sequence is Phosphoribosylformylglycinamidine synthase subunit PurQ (226 aa).

In terms of domain architecture, Glutamine amidotransferase type-1 spans 2–226 (KIAVIVFPGS…LENGTVIAEG (225 aa)). C86 (nucleophile) is an active-site residue. Catalysis depends on residues H195 and E197.

Part of the FGAM synthase complex composed of 1 PurL, 1 PurQ and 2 PurS subunits.

Its subcellular location is the cytoplasm. The enzyme catalyses N(2)-formyl-N(1)-(5-phospho-beta-D-ribosyl)glycinamide + L-glutamine + ATP + H2O = 2-formamido-N(1)-(5-O-phospho-beta-D-ribosyl)acetamidine + L-glutamate + ADP + phosphate + H(+). It catalyses the reaction L-glutamine + H2O = L-glutamate + NH4(+). It participates in purine metabolism; IMP biosynthesis via de novo pathway; 5-amino-1-(5-phospho-D-ribosyl)imidazole from N(2)-formyl-N(1)-(5-phospho-D-ribosyl)glycinamide: step 1/2. In terms of biological role, part of the phosphoribosylformylglycinamidine synthase complex involved in the purines biosynthetic pathway. Catalyzes the ATP-dependent conversion of formylglycinamide ribonucleotide (FGAR) and glutamine to yield formylglycinamidine ribonucleotide (FGAM) and glutamate. The FGAM synthase complex is composed of three subunits. PurQ produces an ammonia molecule by converting glutamine to glutamate. PurL transfers the ammonia molecule to FGAR to form FGAM in an ATP-dependent manner. PurS interacts with PurQ and PurL and is thought to assist in the transfer of the ammonia molecule from PurQ to PurL. The sequence is that of Phosphoribosylformylglycinamidine synthase subunit PurQ from Limosilactobacillus fermentum (strain NBRC 3956 / LMG 18251) (Lactobacillus fermentum).